The primary structure comprises 44 residues: Protein PsbN (44 aa).

The chain crosses the membrane as a helical span at residues 6–26; the sequence is FFFTFFLWFLLLSATGYSIYV.

Belongs to the PsbN family.

The protein resides in the plastid. It localises to the chloroplast thylakoid membrane. In terms of biological role, may play a role in photosystem I and II biogenesis. In Tetradesmus obliquus (Green alga), this protein is Protein PsbN.